The primary structure comprises 346 residues: Putative [LysW]-L-2-aminoadipate/[LysW]-L-glutamate phosphate reductase (346 aa).

Residue Ser-12–Thr-15 coordinates NADP(+). Cys-147 is an active-site residue. An NADP(+)-binding site is contributed by Asn-310.

Belongs to the NAGSA dehydrogenase family. Type 1 subfamily. LysY sub-subfamily.

The protein resides in the cytoplasm. The catalysed reaction is [amino-group carrier protein]-C-terminal-N-(1-carboxy-5-oxopentan-1-yl)-L-glutamine + phosphate + NADP(+) = [amino-group carrier protein]-C-terminal-N-(1-carboxy-5-phosphooxy-5-oxopentan-1-yl)-L-glutamine + NADPH + H(+). It catalyses the reaction [amino-group carrier protein]-C-terminal-gamma-(L-glutamyl-5-semialdehyde)-L-glutamate + phosphate + NADP(+) = [amino-group carrier protein]-C-terminal-gamma-(5-phospho-L-glutamyl)-L-glutamate + NADPH + H(+). The protein operates within amino-acid biosynthesis; L-lysine biosynthesis via AAA pathway; L-lysine from L-alpha-aminoadipate (Thermus route): step 3/5. It functions in the pathway amino-acid biosynthesis; L-arginine biosynthesis. Involved in both the arginine and lysine biosynthetic pathways. The sequence is that of Putative [LysW]-L-2-aminoadipate/[LysW]-L-glutamate phosphate reductase from Natronomonas pharaonis (strain ATCC 35678 / DSM 2160 / CIP 103997 / JCM 8858 / NBRC 14720 / NCIMB 2260 / Gabara) (Halobacterium pharaonis).